A 94-amino-acid polypeptide reads, in one-letter code: Pyrimidine/purine nucleoside phosphorylase (94 aa).

Belongs to the nucleoside phosphorylase PpnP family.

The enzyme catalyses a purine D-ribonucleoside + phosphate = a purine nucleobase + alpha-D-ribose 1-phosphate. It catalyses the reaction adenosine + phosphate = alpha-D-ribose 1-phosphate + adenine. The catalysed reaction is cytidine + phosphate = cytosine + alpha-D-ribose 1-phosphate. It carries out the reaction guanosine + phosphate = alpha-D-ribose 1-phosphate + guanine. The enzyme catalyses inosine + phosphate = alpha-D-ribose 1-phosphate + hypoxanthine. It catalyses the reaction thymidine + phosphate = 2-deoxy-alpha-D-ribose 1-phosphate + thymine. The catalysed reaction is uridine + phosphate = alpha-D-ribose 1-phosphate + uracil. It carries out the reaction xanthosine + phosphate = alpha-D-ribose 1-phosphate + xanthine. Functionally, catalyzes the phosphorolysis of diverse nucleosides, yielding D-ribose 1-phosphate and the respective free bases. Can use uridine, adenosine, guanosine, cytidine, thymidine, inosine and xanthosine as substrates. Also catalyzes the reverse reactions. The polypeptide is Pyrimidine/purine nucleoside phosphorylase (Pseudomonas entomophila (strain L48)).